We begin with the raw amino-acid sequence, 88 residues long: Small ribosomal subunit protein uS15c (88 aa).

Belongs to the universal ribosomal protein uS15 family. Part of the 30S ribosomal subunit.

It localises to the plastid. Its subcellular location is the chloroplast. The sequence is that of Small ribosomal subunit protein uS15c (rps15) from Barbarea verna (Land cress).